Consider the following 552-residue polypeptide: Membrane protein insertase YidC (552 aa).

Residues 3-23 form a helical membrane-spanning segment; the sequence is IKRTVLWVIFFMSAVMLFDNW. The segment at 36-59 is disordered; sequence SATPTRTVGSAAPGTTTPGTQPAD. Residues 42–59 are compositionally biased toward low complexity; the sequence is TVGSAAPGTTTPGTQPAD. Helical transmembrane passes span 364–384, 430–450, and 504–524; these read WGWS…PLSA, FGGC…YWVL, and MMFM…GLVL.

It belongs to the OXA1/ALB3/YidC family. Type 1 subfamily. As to quaternary structure, interacts with the Sec translocase complex via SecD. Specifically interacts with transmembrane segments of nascent integral membrane proteins during membrane integration.

The protein localises to the cell inner membrane. Required for the insertion and/or proper folding and/or complex formation of integral membrane proteins into the membrane. Involved in integration of membrane proteins that insert both dependently and independently of the Sec translocase complex, as well as at least some lipoproteins. Aids folding of multispanning membrane proteins. The polypeptide is Membrane protein insertase YidC (Paraburkholderia xenovorans (strain LB400)).